The following is a 133-amino-acid chain: C-C motif chemokine 21a (133 aa).

The N-terminal stretch at 1–23 (MAQMMTLSLLSLVLALCIPWTQG) is a signal peptide. Cystine bridges form between C31–C57, C32–C75, and C103–C122. Positions 86–133 (LMRRLDQPPAPGKQSPGCRKNRGTSKSGKKGKGSKGCKRTEQTQPSRG) are disordered. The segment at 98-133 (KQSPGCRKNRGTSKSGKKGKGSKGCKRTEQTQPSRG) is C-terminal basic extension. Residues 104 to 122 (RKNRGTSKSGKKGKGSKGC) are compositionally biased toward basic residues.

The protein belongs to the intercrine beta (chemokine CC) family. In terms of assembly, binds to CCR7 and to CXCR3. Interacts with PDPN; relocalizes PDPN to the basolateral membrane. Interacts with GPR174. In terms of tissue distribution, expressed strongly in lung, spleen, thymus, peripheral and mesentric lymph nodes. Also expressed in the testis, kidney, liver, and heart.

It is found in the secreted. Functionally, inhibits hemopoiesis and stimulates chemotaxis. Chemotactic in vitro for thymocytes and activated T-cells, but not for B-cells, macrophages, or neutrophils. Potent mesangial cell chemoattractant. Shows preferential activity towards naive T-cells. May play a role in mediating homing of lymphocytes to secondary lymphoid organs. The protein is C-C motif chemokine 21a (Ccl21a) of Mus musculus (Mouse).